Here is a 282-residue protein sequence, read N- to C-terminus: Digeranylgeranylglyceryl phosphate synthase (282 aa).

9 consecutive transmembrane segments (helical) span residues 15–35 (VIGAALGAIMGFLVSSQWYLE), 36–56 (LKGILLSALVVGLIAAGGYVI), 81–100 (VNKAKALSIALFIIGIALSI), 104–121 (IYALVIALVTAIGLIYYA), 131–151 (GNLLVATTTALSIFYGGLAFF), 159–179 (IIIPTLYAFFLTLIREIVKGI), 201–221 (KSWRIAKILLVLLLIISPLPF), 222–242 (FIGFNLIYLILLILVFIPFTI), and 260–280 (YLKISAISGIIAFLLGSLPFF).

It belongs to the UbiA prenyltransferase family. DGGGP synthase subfamily. The cofactor is Mg(2+). Ca(2+) serves as cofactor.

Its subcellular location is the cell membrane. The enzyme catalyses sn-3-O-(geranylgeranyl)glycerol 1-phosphate + (2E,6E,10E)-geranylgeranyl diphosphate = 2,3-bis-O-(geranylgeranyl)-sn-glycerol 1-phosphate + diphosphate. It participates in membrane lipid metabolism; glycerophospholipid metabolism. With respect to regulation, inhibited by EDTA in vitro. Its function is as follows. Prenyltransferase that catalyzes the transfer of the geranylgeranyl moiety of geranylgeranyl diphosphate (GGPP) to the C2 hydroxyl of (S)-3-O-geranylgeranylglyceryl phosphate (GGGP). This reaction is the second ether-bond-formation step in the biosynthesis of archaeal membrane lipids. Cannot use other prenyl donors, i.e. farnesyl diphosphate (FPP) and phytyl diphosphate. Moreover, 4-hydroxybenzoate, 1,4-dihydroxy 2-naphthoate, homogentisate, and alpha-glycerophosphate do not function as prenyl acceptor substrates. This Saccharolobus solfataricus (strain ATCC 35092 / DSM 1617 / JCM 11322 / P2) (Sulfolobus solfataricus) protein is Digeranylgeranylglyceryl phosphate synthase (ubiA-2).